We begin with the raw amino-acid sequence, 290 residues long: Zinc-finger homeodomain protein 2 (290 aa).

Positions 1 to 15 (MDFDDHDEGDGDEEM) are enriched in acidic residues. The disordered stretch occupies residues 1 to 59 (MDFDDHDEGDGDEEMPPMPLSSGYDAPMQPGLGGGGGGVPKPGGGVGGGGGGGGGGGGG). Residues 31-59 (GLGGGGGGVPKPGGGVGGGGGGGGGGGGG) show a composition bias toward gly residues. Residues 63-112 (YRECLKNHAVGIGGHAVDGCGEFMASGEEGSIDALRCAACGCHRNFHRKE) form a ZF-HD dimerization-type; degenerate zinc finger. A DNA-binding region (homeobox) is located at residues 226–289 (KKRFRTKFTQ…NNKHTLGKKA (64 aa)).

In terms of assembly, homo- and heterodimer with other ZFHD proteins.

The protein localises to the nucleus. Putative transcription factor. This is Zinc-finger homeodomain protein 2 (ZHD2) from Oryza sativa subsp. japonica (Rice).